A 235-amino-acid chain; its full sequence is Secretory carrier-associated membrane protein 5A (235 aa).

The Cytoplasmic portion of the chain corresponds to 1–39 (MSDKPNNFPPLPRFIPLKPCFYQDFDTDIPDLHRTTAKR). A helical membrane pass occupies residues 40 to 60 (LYYLWMLNSITLGVNLIGCLA). The Extracellular portion of the chain corresponds to 61 to 67 (WLIGGGS). The helical transmembrane segment at 68–88 (ATNFGLAFLWLILFTPCSYVC) threads the bilayer. Residues 89–102 (WFRPIYKAFKTDSS) lie on the Cytoplasmic side of the membrane. A helical transmembrane segment spans residues 103–125 (FNFMAFFFTFTAQLVISIIQAVG). Over 126 to 148 (IPGWGVCGWIASISFFGTNVGSA) the chain is Extracellular. The helical transmembrane segment at 149 to 169 (VVMLIPTIMFTAVAVLSFVAL) threads the bilayer. The Cytoplasmic segment spans residues 170-235 (TKVHRFYRGA…TPNYGYSNEM (66 aa)).

The protein belongs to the SCAMP family. SCAMP5 subfamily.

The protein resides in the cell membrane. The protein localises to the golgi apparatus membrane. It is found in the golgi apparatus. Its subcellular location is the trans-Golgi network membrane. It localises to the recycling endosome membrane. The protein resides in the cytoplasmic vesicle. The protein localises to the secretory vesicle. It is found in the synaptic vesicle membrane. In terms of biological role, required for the calcium-dependent exocytosis of signal sequence-containing cytokines. Probably acts in cooperation with the SNARE machinery. The protein is Secretory carrier-associated membrane protein 5A (scamp5-a) of Xenopus laevis (African clawed frog).